A 552-amino-acid chain; its full sequence is Mothers against decapentaplegic homolog 4 (552 aa).

The mediates interaction with ZBTB7A stretch occupies residues 1 to 322; the sequence is MDNMSITNTP…PISNHPAPEY (322 aa). In terms of domain architecture, MH1 spans 18 to 142; it reads SIVHSLMCHR…YERVVSPGID (125 aa). Lysine 37 carries the post-translational modification N6-acetyllysine. The required for interaction with TSC22D1 stretch occupies residues 44–69; sequence VKKLKEKKDELDSLITAITTNGAHPS. Cysteine 71 is a binding site for Zn(2+). Residue lysine 113 forms a Glycyl lysine isopeptide (Lys-Gly) (interchain with G-Cter in SUMO2) linkage. 3 residues coordinate Zn(2+): cysteine 115, cysteine 127, and histidine 132. Disordered stretches follow at residues 168–194 and 236–256; these read GQPSLSTEGHSIQTIQHPPSNRASTET and GLLQIASGPQPGQQQNGFTGQ. Polar residues-rich tracts occupy residues 170-194 and 245-256; these read PSLSTEGHSIQTIQHPPSNRASTET and QPGQQQNGFTGQ. Residues 275–320 are SAD; sequence PYTPNLPHHQNGHLQHHPPMPPHPGHYWPVHNELAFQPPISNHPAP. Residues 323-552 enclose the MH2 domain; the sequence is WCSIAYFEMD…MPIADPQPLD (230 aa). An N6-acetyllysine mark is found at lysine 428 and lysine 507. A Glycyl lysine isopeptide (Lys-Gly) (interchain with G-Cter in ubiquitin) cross-link involves residue lysine 519.

Belongs to the dwarfin/SMAD family. Monomer; in the absence of TGF-beta activation. Heterotrimer; on TGF-beta activation. Heterotrimer composed of two molecules of a C-terminally phosphorylated R-SMAD molecule, SMAD2 or SMAD3, and one molecule of SMAD4 to form the transcriptional active SMAD2/SMAD3-SMAD4 complex. Found in a ternary complex composed of SMAD4, STK11/LKB1 and STK11IP. Found in a complex with SMAD1 and YY1. Identified in a complex that contains at least ZNF451, SMAD2, SMAD3 and SMAD4. Interacts with ATF2, COPS5, DACH1, MSG1, SKI, STK11/LKB1, STK11IP and TRIM33. Associates with ZNF423 or ZNF521 in response to BMP2 leading to activate transcription of BMP target genes. Interacts with USP9X. Interacts (via the MH1 and MH2 domains) with RBPMS. Interacts with WWTR1 (via coiled-coil domain). Interacts with CITED1 and CITED2. Interacts with PDPK1 (via PH domain). Interacts with VPS39; this interaction affects heterodimer formation with SMAD3, but not with SMAD2, and leads to inhibition of SMAD3-dependent transcription activation. Interactions with VPS39 and SMAD2 may be mutually exclusive. Interacts (via MH2 domain) with ZNF451 (via N-terminal zinc-finger domains). Interacts with ZC3H3. Interacts weakly with ZNF8. Interacts with NUP93 and IPO7; translocates SMAD4 to the nucleus through the NPC upon BMP7 stimulation resulting in activation of SMAD4 signaling. Interacts with CREB3L1, the interaction takes place upon TGFB1 induction and SMAD4 acts as a CREB3L1 coactivator to induce the expression of genes involved in the assembly of collagen extracellular matrix. Interacts with DLX1. Interacts with ZBTB7A; the interaction is direct and stimulated by TGFB1. Interacts with CREBBP; the recruitment of this transcriptional coactivator is negatively regulated by ZBTB7A. Interacts with EP300; the interaction with this transcriptional coactivator is negatively regulated by ZBTB7A. Interacts with HDAC1. Interacts (via MH2 domain) with ZMIZ1 (via SP-RING-type domain); in the TGF-beta signaling pathway increases the activity of the SMAD3/SMAD4 transcriptional complex. Interacts (via N-terminus) with TSC22D1. Phosphorylated by PDPK1. Post-translationally, monoubiquitinated on Lys-519 by E3 ubiquitin-protein ligase TRIM33. Monoubiquitination hampers its ability to form a stable complex with activated SMAD2/3 resulting in inhibition of TGF-beta/BMP signaling cascade. Deubiquitination by USP9X restores its competence to mediate TGF-beta signaling.

Its subcellular location is the cytoplasm. The protein localises to the nucleus. In terms of biological role, in muscle physiology, plays a central role in the balance between atrophy and hypertrophy. When recruited by MSTN, promotes atrophy response via phosphorylated SMAD2/4. MSTN decrease causes SMAD4 release and subsequent recruitment by the BMP pathway to promote hypertrophy via phosphorylated SMAD1/5/8. Acts synergistically with SMAD1 and YY1 in bone morphogenetic protein (BMP)-mediated cardiac-specific gene expression. Binds to SMAD binding elements (SBEs) (5'-GTCT/AGAC-3') within BMP response element (BMPRE) of cardiac activating regions. Common SMAD (co-SMAD) is the coactivator and mediator of signal transduction by TGF-beta (transforming growth factor). Component of the heterotrimeric SMAD2/SMAD3-SMAD4 complex that forms in the nucleus and is required for the TGF-mediated signaling. Promotes binding of the SMAD2/SMAD4/FAST-1 complex to DNA and provides an activation function required for SMAD1 or SMAD2 to stimulate transcription. Component of the multimeric SMAD3/SMAD4/JUN/FOS complex which forms at the AP1 promoter site; required for synergistic transcriptional activity in response to TGF-beta. May act as a tumor suppressor. Positively regulates PDPK1 kinase activity by stimulating its dissociation from the 14-3-3 protein YWHAQ which acts as a negative regulator. This is Mothers against decapentaplegic homolog 4 (SMAD4) from Homo sapiens (Human).